The sequence spans 427 residues: 3-phosphoshikimate 1-carboxyvinyltransferase (427 aa).

Positions 23, 24, and 28 each coordinate 3-phosphoshikimate. Phosphoenolpyruvate is bound at residue lysine 23. Phosphoenolpyruvate-binding residues include glycine 97 and arginine 125. Residues serine 170, serine 171, glutamine 172, serine 198, aspartate 314, asparagine 337, and lysine 341 each coordinate 3-phosphoshikimate. Glutamine 172 is a phosphoenolpyruvate binding site. Residue aspartate 314 is the Proton acceptor of the active site. The phosphoenolpyruvate site is built by arginine 345, arginine 387, and lysine 412.

It belongs to the EPSP synthase family. Monomer.

It is found in the cytoplasm. It catalyses the reaction 3-phosphoshikimate + phosphoenolpyruvate = 5-O-(1-carboxyvinyl)-3-phosphoshikimate + phosphate. Its pathway is metabolic intermediate biosynthesis; chorismate biosynthesis; chorismate from D-erythrose 4-phosphate and phosphoenolpyruvate: step 6/7. Catalyzes the transfer of the enolpyruvyl moiety of phosphoenolpyruvate (PEP) to the 5-hydroxyl of shikimate-3-phosphate (S3P) to produce enolpyruvyl shikimate-3-phosphate and inorganic phosphate. The polypeptide is 3-phosphoshikimate 1-carboxyvinyltransferase (Buchnera aphidicola subsp. Baizongia pistaciae (strain Bp)).